The following is a 315-amino-acid chain: Homoserine kinase (315 aa).

Residue 97–107 coordinates ATP; that stretch reads PPARGLGSSAT.

It belongs to the GHMP kinase family. Homoserine kinase subfamily.

Its subcellular location is the cytoplasm. The enzyme catalyses L-homoserine + ATP = O-phospho-L-homoserine + ADP + H(+). It functions in the pathway amino-acid biosynthesis; L-threonine biosynthesis; L-threonine from L-aspartate: step 4/5. In terms of biological role, catalyzes the ATP-dependent phosphorylation of L-homoserine to L-homoserine phosphate. The chain is Homoserine kinase from Synechococcus sp. (strain CC9605).